Reading from the N-terminus, the 55-residue chain is uncharacterized protein (55 aa).

This is an uncharacterized protein from Rickettsia prowazekii (strain Madrid E).